The following is a 149-amino-acid chain: Alpha-crystallin A chain (149 aa).

Residues 41-149 (LFRSVLESGI…DASHGERPIP (109 aa)) enclose the sHSP domain. His89, Glu91, His96, and His143 together coordinate Zn(2+).

Belongs to the small heat shock protein (HSP20) family. As to quaternary structure, heteropolymer composed of three CRYAA and one CRYAB subunits. Inter-subunit bridging via zinc ions enhances stability, which is crucial as there is no protein turn over in the lens. Can also form homodimers and homotetramers (dimers of dimers) which serve as the building blocks of homooligomers. Within homooligomers, the zinc-binding motif is created from residues of 3 different molecules. His-89 and Glu-91 from one molecule are ligands of the zinc ion, and His-96 and His-143 residues from additional molecules complete the site with tetrahedral coordination geometry. Part of a complex required for lens intermediate filament formation composed of BFSP1, BFSP2 and CRYAA.

The protein resides in the cytoplasm. Its subcellular location is the nucleus. Its function is as follows. Contributes to the transparency and refractive index of the lens. May act as a chaperone, preventing aggregation of various proteins under a wide range of stress conditions. This is Alpha-crystallin A chain (CRYAA) from Columba livia (Rock dove).